A 203-amino-acid chain; its full sequence is Ribonuclease HII (203 aa).

Residues 16-203 (ENIACCDEVG…HRKSFLNKIL (188 aa)) enclose the RNase H type-2 domain. A divalent metal cation contacts are provided by D22, E23, and D120.

It belongs to the RNase HII family. Mn(2+) serves as cofactor. It depends on Mg(2+) as a cofactor.

It is found in the cytoplasm. The enzyme catalyses Endonucleolytic cleavage to 5'-phosphomonoester.. In terms of biological role, endonuclease that specifically degrades the RNA of RNA-DNA hybrids. This is Ribonuclease HII from Alkaliphilus oremlandii (strain OhILAs) (Clostridium oremlandii (strain OhILAs)).